The sequence spans 110 residues: ATP-dependent Clp protease adapter protein ClpS 2 (110 aa).

The disordered stretch occupies residues M1–P24. Over residues S8–I19 the composition is skewed to polar residues.

Belongs to the ClpS family. As to quaternary structure, binds to the N-terminal domain of the chaperone ClpA.

Involved in the modulation of the specificity of the ClpAP-mediated ATP-dependent protein degradation. The chain is ATP-dependent Clp protease adapter protein ClpS 2 from Bradyrhizobium diazoefficiens (strain JCM 10833 / BCRC 13528 / IAM 13628 / NBRC 14792 / USDA 110).